The following is a 705-amino-acid chain: Dolichyl-diphosphooligosaccharide--protein glycosyltransferase subunit STT3A (705 aa).

The Cytoplasmic portion of the chain corresponds to 1-17 (MTKFGFLRLSYEKQDTL). The chain crosses the membrane as a helical span at residues 18–38 (LKLLILSMAAVLSFSTRLFAV). Over 39–119 (LRFESVIHEF…IDIRNVCVFL (81 aa)) the chain is Lumenal. The DXD motif 1 signature appears at 47 to 49 (EFD). Asp-49 is a binding site for Mn(2+). A helical transmembrane segment spans residues 120–138 (APLFSSFTTIVTYHLTKEL). Residues 139–140 (KD) are Cytoplasmic-facing. The helical transmembrane segment at 141-158 (AGAGLLAAAMIAVVPGYI) threads the bilayer. At 159-169 (SRSVAGSYDNE) the chain is on the lumenal side. Asp-167 and Glu-169 together coordinate Mn(2+). The DXD motif 2 motif lies at 167 to 169 (DNE). Residues 170 to 189 (GIAIFCMLLTYYMWIKAVKT) traverse the membrane as a helical segment. Residues 190–191 (GS) are Cytoplasmic-facing. The helical transmembrane segment at 192–206 (ICWAAKCALAYFYMV) threads the bilayer. Residues 207-211 (SSWGG) lie on the Lumenal side of the membrane. Residues 212–228 (YVFLINLIPLHVLVLML) traverse the membrane as a helical segment. The Cytoplasmic segment spans residues 229 to 233 (TGRFS). The helical transmembrane segment at 234–259 (HRIYVAYCTVYCLGTILSMQISFVGF) threads the bilayer. The Lumenal segment spans residues 260 to 267 (QPVLSSEH). Residues 268 to 287 (MAAFGVFGLCQIHAFVDYLR) traverse the membrane as a helical segment. Topologically, residues 288–300 (SKLNPQQFEVLFR) are cytoplasmic. A helical membrane pass occupies residues 301–321 (SVISLVGFVLLTVGALLMLTG). Topologically, residues 322–356 (KISPWTGRFYSLLDPSYAKNNIPIIASVSEHQPTT) are lumenal. The SVSE motif motif lies at 348–351 (SVSE). A helical membrane pass occupies residues 357–379 (WSSYYFDLQLLVFMFPVGLYYCF). Over 380–385 (SNLSDA) the chain is Cytoplasmic. The chain crosses the membrane as a helical span at residues 386-402 (RIFIIMYGVTSMYFSAV). The Lumenal segment spans residues 403-406 (MVRL). A dolichyl diphosphooligosaccharide-binding site is contributed by Arg-405. A helical transmembrane segment spans residues 407–428 (MLVLAPVMCILSGIGVSQVLST). Residues 429–453 (YMKNLDISRPDKKSKKQQDSTYPIK) lie on the Cytoplasmic side of the membrane. The helical transmembrane segment at 454 to 473 (NEVASGMILVMAFFLITYTF) threads the bilayer. Residues 474 to 705 (HSTWVTSEAY…DLDNRGLSRT (232 aa)) are Lumenal-facing. Residues 525 to 527 (WWD) form an interacts with target acceptor peptide in protein substrate region. The short motif at 525-529 (WWDYG) is the WWDYG motif element. Tyr-530 contacts dolichyl diphosphooligosaccharide. Asn-537 and Asn-544 each carry an N-linked (GlcNAc...) asparagine glycan. N-linked (GlcNAc...) (high mannose) asparagine glycosylation is present at Asn-548. Residues 592–599 (DINKFLWM) carry the DK motif motif.

It belongs to the STT3 family. As to quaternary structure, component of the oligosaccharyltransferase (OST) complex. There are 2 OST complexes, OST-A and OST-B, which contain STT3A or STT3B as catalytic subunit, respectively. OST-A and OST-B contain common core subunits RPN1, RPN2, OST48, OST4, DAD1 and TMEM258, and OST-A contains DC2/OSTC and KRTCAP2/KCP2 specific accessory subunits. OST-A complex assembly occurs through the formation of 3 subcomplexes. Subcomplex 1 contains RPN1 and TMEM258, subcomplex 2 contains the OST-A-specific subunits STT3A, DC2/OSTC, and KCP2 as well as the core subunit OST4, and subcomplex 3 contains RPN2, DAD1, and OST48. The OST-A complex can form stable complexes with the Sec61 complex or with both the Sec61 and TRAP complexes. It depends on Mg(2+) as a cofactor. The cofactor is Mn(2+). In terms of tissue distribution, expressed at high levels in placenta, liver, muscle and pancreas, and at very low levels in brain, lung and kidney. Expressed in skin fibroblasts (at protein level).

It localises to the endoplasmic reticulum. The protein localises to the endoplasmic reticulum membrane. It catalyses the reaction a di-trans,poly-cis-dolichyl diphosphooligosaccharide + L-asparaginyl-[protein] = N(4)-(oligosaccharide-(1-&gt;4)-N-acetyl-beta-D-glucosaminyl-(1-&gt;4)-N-acetyl-beta-D-glucosaminyl)-L-asparaginyl-[protein] + a di-trans,poly-cis-dolichyl diphosphate + H(+). Its pathway is protein modification; protein glycosylation. With respect to regulation, STT3A, but not STT3B, is specifically inhibited by the N-glycosylation inhibitor NGI-235, which prevents productive binding pose of the glycan donor in the active site of STT3A. Catalytic subunit of the oligosaccharyl transferase (OST) complex that catalyzes the initial transfer of a defined glycan (Glc(3)Man(9)GlcNAc(2) in eukaryotes) from the lipid carrier dolichol-pyrophosphate to an asparagine residue within an Asn-X-Ser/Thr consensus motif in nascent polypeptide chains, the first step in protein N-glycosylation. N-glycosylation occurs cotranslationally and the complex associates with the Sec61 complex at the channel-forming translocon complex that mediates protein translocation across the endoplasmic reticulum (ER). All subunits are required for a maximal enzyme activity. This subunit contains the active site and the acceptor peptide and donor lipid-linked oligosaccharide (LLO) binding pockets. STT3A is present in the majority of OST complexes and mediates cotranslational N-glycosylation of most sites on target proteins, while STT3B-containing complexes are required for efficient post-translational glycosylation and mediate glycosylation of sites that have been skipped by STT3A. STT3A-containing OST-A complex is also required to prevent hyperglycosylation of some target proteins by preventing glycosylation of facultative sites before folding of target proteins is completed. The chain is Dolichyl-diphosphooligosaccharide--protein glycosyltransferase subunit STT3A from Homo sapiens (Human).